We begin with the raw amino-acid sequence, 2440 residues long: MSSSGYPPNQGAFSTEQSRYPPHSVQYTFPNTRHQQEFAVPDYRSSHLEVSQASQLLQQQQQQQLRRRPSLLSEFHPGSDRPQERRTSYEPFHPGPSPVDHDSLESKRPRLEQVSDSHFQRVSAAVLPLVHPLPEGLRASADAKKDPAFGGKHEAPSSPISGQPCGDDQNASPSKLSKEELIQSMDRVDREIAKVEQQILKLKKKQQQLEEEAAKPPEPEKPVSPPPVEQKHRSIVQIIYDENRKKAEEAHKIFEGLGPKVELPLYNQPSDTKVYHENIKTNQVMRKKLILFFKRRNHARKQREQKICQRYDQLMEAWEKKVDRIENNPRRKAKESKTREYYEKQFPEIRKQREQQERFQRVGQRGAGLSATIARSEHEISEIIDGLSEQENNEKQMRQLSVIPPMMFDAEQRRVKFINMNGLMEDPMKVYKDRQFMNVWTDHEKEIFKDKFIQHPKNFGLIASYLERKSVPDCVLYYYLTKKNENYKALVRRNYGKRRGRNQQIARPSQEEKVEEKEEDKAEKTEKKEEEKKDEEEKDEKEDSKENTKEKDKIDGTAEETEEREQATPRGRKTANSQGRRKGRITRSMTNEAAAASAAAAAATEEPPPPLPPPPEPISTEPVETSRWTEEEMEVAKKGLVEHGRNWAAIAKMVGTKSEAQCKNFYFNYKRRHNLDNLLQQHKQKTSRKPREERDVSQCESVASTVSAQEDEDIEASNEEENPEDSEVEAVKPSEDSPENATSRGNTEPAVELEPTTETAPSTSPSLAVPSTKPAEDESVETQVNDSISAETAEQMDVDQQEHSAEEGSVCDPPPATKADSVDVEVRVPENHASKVEGDNTKERDLDRASEKVEPRDEDLVVAQQINAQRPEPQSDNDSSATCSADEDVDGEPERQRMFPMDSKPSLLNPTGSILVSSPLKPNPLDLPQLQHRAAVIPPMVSCTPCNIPIGTPVSGYALYQRHIKAMHESALLEEQRQRQEQIDLECRSSTSPCGTSKSPNREWEVLQPAPHQVITNLPEGVRLPTTRPTRPPPPLIPSSKTTVASEKPSFIMGGSISQGTPGTYLTSHNQASYTQETPKPSVGSISLGLPRQQESAKSATLPYIKQEEFSPRSQNSQPEGLLVRAQHEGVVRGTAGAIQEGSITRGTPTSKISVESIPSLRGSITQGTPALPQTGIPTEALVKGSISRMPIEDSSPEKGREEAASKGHVIYEGKSGHILSYDNIKNAREGTRSPRTAHEISLKRSYESVEGNIKQGMSMRESPVSAPLEGLICRALPRGSPHSDLKERTVLSGSIMQGTPRATTESFEDGLKYPKQIKRESPPIRAFEGAITKGKPYDGITTIKEMGRSIHEIPRQDILTQESRKTPEVVQSTRPIIEGSISQGTPIKFDNNSGQSAIKHNVKSLITGPSKLSRGMPPLEIVPENIKVVERGKYEDVKAGETVRSRHTSVVSSGPSVLRSTLHEAPKAQLSPGIYDDTSARRTPVSYQNTMSRGSPMMNRTSDVTISSNKSTNHERKSTLTPTQRESIPAKSPVPGVDPVVSHSPFDPHHRGSTAGEVYRSHLPTHLDPAMPFHRALDPAAAAYLFQRQLSPTPGYPSQYQLYAMENTRQTILNDYITSQQMQVNLRPDVARGLSPREQPLGLPYPATRGIIDLTNMPPTILVPHPGGTSTPPMDRITYIPGTQITFPPRPYNSASMSPGHPTHLAAAASAEREREREREKERERERIAAASSDLYLRPGSEQPGRPGSHGYVRSPSPSVRTQETMLQQRPSVFQGTNGTSVITPLDPTAQLRIMPLPAGGPSISQGLPASRYNTAADALAALVDAAASAPQMDVSKTKESKHEAARLEENLRSRSAAVSEQQQLEQKTLEVEKRSVQCLYTSSAFPSGKPQPHSSVVYSEAGKDKGPPPKSRYEEELRTRGKTTITAANFIDVIITRQIASDKDARERGSQSSDSSSSLSSHRYETPSDAIEVISPASSPAPPQEKLQTYQPEVVKANQAENDPTRQYEGPLHHYRPQQESPSPQQQLPPSSQAEGMGQVPRTHRLITLADHICQIITQDFARNQVSSQTPQQPPTSTFQNSPSALVSTPVRTKTSNRYSPESQAQSVHHQRPGSRVSPENLVDKSRGSRPGKSPERSHVSSEPYEPISPPQVPVVHEKQDSLLLLSQRGAEPAEQRNDARSPGSISYLPSFFTKLENTSPMVKSKKQEIFRKLNSSGGGDSDMAAAQPGTEIFNLPAVTTSGSVSSRGHSFADPASNLGLEDIIRKALMGSFDDKVEDHGVVMSQPMGVVPGTANTSVVTSGETRREEGDPSPHSGGVCKPKLISKSNSRKSKSPIPGQGYLGTERPSSVSSVHSEGDYHRQTPGWAWEDRPSSTGSTQFPYNPLTMRMLSSTPPTPIACAPSAVNQAAPHQQNRIWEREPAPLLSAQYETLSDSDD.

Over residues 1–18 (MSSSGYPPNQGAFSTEQS) the composition is skewed to polar residues. Disordered stretches follow at residues 1–177 (MSSS…SKLS) and 206–231 (QQQL…VEQK). The tract at residues 1 to 373 (MSSSGYPPNQ…QRGAGLSATI (373 aa)) is interaction with ZBTB33 and HEXIM1. A compositionally biased stretch (low complexity) spans 51-64 (SQASQLLQQQQQQQ). Composition is skewed to basic and acidic residues over residues 77 to 88 (PGSDRPQERRTS), 99 to 119 (VDHD…DSHF), and 141 to 155 (ADAK…KHEA). Residue Ser172 is modified to Phosphoserine. Residues 174 to 216 (SKLSKEELIQSMDRVDREIAKVEQQILKLKKKQQQLEEEAAKP) adopt a coiled-coil conformation. Over residues 212–221 (EAAKPPEPEK) the composition is skewed to basic and acidic residues. Ser224 carries the post-translational modification Phosphoserine. Residues 254–312 (FEGLGPKVELPLYNQPSDTKVYHENIKTNQVMRKKLILFFKRRNHARKQREQKICQRYD) are interaction with SIN3A/B. Positions 299–328 (ARKQREQKICQRYDQLMEAWEKKVDRIENN) form a coiled coil. The region spanning 435–486 (QFMNVWTDHEKEIFKDKFIQHPKNFGLIASYLERKSVPDCVLYYYLTKKNEN) is the SANT 1 domain. Disordered stretches follow at residues 497-632 (KRRG…TEEE) and 677-915 (NLLQ…GSIL). A coiled-coil region spans residues 501-557 (RNQQIARPSQEEKVEEKEEDKAEKTEKKEEEKKDEEEKDEKEDSKENTKEKDKIDGT). Composition is skewed to basic and acidic residues over residues 509–531 (SQEE…KEEE) and 541–556 (KEDS…KIDG). Over residues 592-605 (EAAAASAAAAAATE) the composition is skewed to low complexity. Over residues 606-617 (EPPPPLPPPPEP) the composition is skewed to pro residues. The 52-residue stretch at 623 to 674 (VETSRWTEEEMEVAKKGLVEHGRNWAAIAKMVGTKSEAQCKNFYFNYKRRHN) folds into the SANT 2 domain. Positions 698–708 (QCESVASTVSA) are enriched in polar residues. The span at 709 to 728 (QEDEDIEASNEEENPEDSEV) shows a compositional bias: acidic residues. The segment covering 752-768 (ELEPTTETAPSTSPSLA) has biased composition (low complexity). The span at 781-792 (ETQVNDSISAET) shows a compositional bias: polar residues. The segment covering 820–859 (DSVDVEVRVPENHASKVEGDNTKERDLDRASEKVEPRDED) has biased composition (basic and acidic residues). Composition is skewed to polar residues over residues 864–883 (QQIN…SATC) and 906–915 (SLLNPTGSIL). Residues 988–1816 (RSSTSPCGTS…QGLPASRYNT (829 aa)) form an interaction with ETO region. Ser999 carries the phosphoserine modification. The interval 1022 to 1046 (VRLPTTRPTRPPPPLIPSSKTTVAS) is disordered. Lys1106 is covalently cross-linked (Glycyl lysine isopeptide (Lys-Gly) (interchain with G-Cter in SUMO1); alternate). Lys1106 participates in a covalent cross-link: Glycyl lysine isopeptide (Lys-Gly) (interchain with G-Cter in SUMO2); alternate. Ser1111 carries the post-translational modification Phosphoserine. Lys1184 participates in a covalent cross-link: Glycyl lysine isopeptide (Lys-Gly) (interchain with G-Cter in SUMO2). The interval 1184-1204 (KGSISRMPIEDSSPEKGREEA) is disordered. Phosphoserine occurs at positions 1195, 1196, 1249, 1263, 1281, and 1322. Residue Lys1336 is modified to N6-acetyllysine. Thr1367 carries the post-translational modification Phosphothreonine. Lys1389 participates in a covalent cross-link: Glycyl lysine isopeptide (Lys-Gly) (interchain with G-Cter in SUMO2). A Glycyl lysine isopeptide (Lys-Gly) (interchain with G-Cter in SUMO2); alternate cross-link involves residue Lys1412. An N6-acetyllysine; alternate modification is found at Lys1412. The tract at residues 1440–1459 (AGETVRSRHTSVVSSGPSVL) is disordered. Ser1450 and Ser1472 each carry phosphoserine. Over residues 1488-1512 (YQNTMSRGSPMMNRTSDVTISSNKS) the composition is skewed to polar residues. The disordered stretch occupies residues 1488 to 1554 (YQNTMSRGSP…SPFDPHHRGS (67 aa)). The interval 1501-2440 (RTSDVTISSN…QYETLSDSDD (940 aa)) is interaction with C1D. Lys1518 participates in a covalent cross-link: Glycyl lysine isopeptide (Lys-Gly) (interchain with G-Cter in SUMO2). The residue at position 1592 (Ser1592) is a Phosphoserine. 2 disordered regions span residues 1690 to 1759 (PRPY…SPSP) and 1884 to 1922 (SSAF…LRTR). Composition is skewed to basic and acidic residues over residues 1712 to 1729 (AERE…RERI) and 1903 to 1921 (AGKD…ELRT). Residues 1933-1937 (IDVII) carry the CORNR box 1 motif. The segment at 1943-1969 (SDKDARERGSQSSDSSSSLSSHRYETP) is disordered. Over residues 1952-1963 (SQSSDSSSSLSS) the composition is skewed to low complexity. Residues Ser1977 and Ser1981 each carry the phosphoserine modification. The disordered stretch occupies residues 2006-2041 (PTRQYEGPLHHYRPQQESPSPQQQLPPSSQAEGMGQ). Residues 2020–2035 (QQESPSPQQQLPPSSQ) are compositionally biased toward low complexity. The ID1 stretch occupies residues 2032-2115 (PSSQAEGMGQ…QAQSVHHQRP (84 aa)). The tract at residues 2047–2050 (RLIT) is required for interaction with RARA in the absence of its ligand. Residues 2055–2059 (ICQII) carry the CORNR box 2 motif. Residues 2067–2086 (QVSSQTPQQPPTSTFQNSPS) are compositionally biased toward low complexity. Residues 2067–2155 (QVSSQTPQQP…PYEPISPPQV (89 aa)) form a disordered region. Polar residues predominate over residues 2087–2110 (ALVSTPVRTKTSNRYSPESQAQSV). Phosphoserine is present on residues Ser2102, Ser2120, Ser2136, Ser2151, and Ser2184. Basic and acidic residues predominate over residues 2124 to 2142 (LVDKSRGSRPGKSPERSHV). Positions 2212-2273 (IFRKLNSSGG…EDIIRKALMG (62 aa)) are ID2. The CORNR box 3 motif lies at 2263–2267 (LEDII). Residues 2287-2440 (SQPMGVVPGT…QYETLSDSDD (154 aa)) form a disordered region. The span at 2296 to 2305 (TANTSVVTSG) shows a compositional bias: polar residues. Phosphothreonine is present on Thr2399. Polar residues-rich tracts occupy residues 2407–2418 (AVNQAAPHQQNR) and 2431–2440 (QYETLSDSDD). Phosphoserine occurs at positions 2436 and 2438.

The protein belongs to the N-CoR nuclear receptor corepressors family. As to quaternary structure, forms a large corepressor complex that contains SIN3A/B and histone deacetylases HDAC1 and HDAC2. This complex associates with the thyroid receptor (TR) and the retinoid acid receptor (RAR) in the absence of ligand. Interacts directly with RARA; the interaction is facilitated with RARA trimethylation. Component of the N-Cor repressor complex, at least composed of CBFA2T3, HEXIM1, NCOR1, NCOR2, HDAC3, TBL1X, TBL1XR1, CORO2A and GPS2. Interacts with ZBTB33; the interaction serves to recruit the N-CoR complex to promoter regions containing methylated CpG dinucleotides. Interacts with TRIM28 and KDM3A. Interacts (via the RD1 domain) with BAZ1A (via its N-terminal); the interaction corepresses a number of NCOR1-regulated genes. Interacts with BCL6, C1D, DACH1, HEXIM1, HDAC7, RORA, RORC, SAP30, SIAH2, SIN3A and SIN3B. May interact with DEAF1. Interacts with RXRA. Interacts with SETD5. Interacts with VDR. Interacts with ZBTB7A. Interacts with AR. Interacts with HDAC3. Ubiquitinated; mediated by SIAH2 and leading to its subsequent proteasomal degradation.

It localises to the nucleus. Functionally, mediates transcriptional repression by certain nuclear receptors. Part of a complex which promotes histone deacetylation and the formation of repressive chromatin structures which may impede the access of basal transcription factors. Participates in the transcriptional repressor activity produced by BCL6. Recruited by ZBTB7A to the androgen response elements/ARE on target genes, negatively regulates androgen receptor signaling and androgen-induced cell proliferation. Mediates the NR1D1-dependent repression and circadian regulation of TSHB expression. The NCOR1-HDAC3 complex regulates the circadian expression of the core clock gene ARTNL/BMAL1 and the genes involved in lipid metabolism in the liver. The protein is Nuclear receptor corepressor 1 (NCOR1) of Homo sapiens (Human).